Reading from the N-terminus, the 1294-residue chain is von Willebrand factor A domain-containing protein 3B (1294 aa).

One can recognise a VWFA domain in the interval 508–684; the sequence is CIYILIDTSH…EDLTLLVKEM (177 aa). Disordered stretches follow at residues 732 to 754, 778 to 803, 1012 to 1036, and 1193 to 1247; these read CAKP…KGPW, RSQM…SSRR, APGE…DPLK, and DTQD…PRTA. Polar residues predominate over residues 738–748; the sequence is DVDSTQTSSLN. Residues 778-787 show a composition bias toward low complexity; the sequence is RSQMSSLRSS. Residues 1193 to 1202 are compositionally biased toward basic and acidic residues; the sequence is DTQDSREPRR. The span at 1203–1212 shows a compositional bias: basic residues; that stretch reads EKPRRKKRPA. Over residues 1213–1236 the composition is skewed to low complexity; that stretch reads KQPLQQAAPSDSDGSSHGISSHGS.

The protein localises to the cytoplasm. The chain is von Willebrand factor A domain-containing protein 3B (VWA3B) from Homo sapiens (Human).